Here is a 635-residue protein sequence, read N- to C-terminus: Threonine--tRNA ligase (635 aa).

Positions 1-61 (MIAITLPDGS…EQNVDLAIVT (61 aa)) constitute a TGS domain. A catalytic region spans residues 242-533 (DHRKLGKLLD…LLENHAGALP (292 aa)). 3 residues coordinate Zn(2+): Cys333, His384, and His510.

This sequence belongs to the class-II aminoacyl-tRNA synthetase family. Homodimer. It depends on Zn(2+) as a cofactor.

The protein localises to the cytoplasm. The catalysed reaction is tRNA(Thr) + L-threonine + ATP = L-threonyl-tRNA(Thr) + AMP + diphosphate + H(+). Its function is as follows. Catalyzes the attachment of threonine to tRNA(Thr) in a two-step reaction: L-threonine is first activated by ATP to form Thr-AMP and then transferred to the acceptor end of tRNA(Thr). Also edits incorrectly charged L-seryl-tRNA(Thr). The sequence is that of Threonine--tRNA ligase from Ralstonia nicotianae (strain ATCC BAA-1114 / GMI1000) (Ralstonia solanacearum).